Reading from the N-terminus, the 1499-residue chain is Pleiotropic ABC efflux transporter of multiple drugs CDR1 (1499 aa).

The segment covering 1–11 (MSLASDKKDAD) has biased composition (basic and acidic residues). The interval 1 to 29 (MSLASDKKDADVASTTTTAQDDDNLSTYH) is disordered. N24, N96, and N99 each carry an N-linked (GlcNAc...) asparagine glycan. The region spanning 146 to 399 (VYNTVVPSTA…FQKMGYVSPE (254 aa)) is the ABC transporter 1 domain. S307 is subject to Phosphoserine. N-linked (GlcNAc...) asparagine glycosylation is present at N323. S484 is modified (phosphoserine). Residues 510–530 (GVTLFMVIGNSSMAFILGSMF) traverse the membrane as a helical segment. The N-linked (GlcNAc...) asparagine glycan is linked to N537. Transmembrane regions (helical) follow at residues 548-568 (AMFF…FSLF), 597-617 (VPAK…LVNF), 622-642 (GVFF…SHLF), 654-674 (AAMV…GFAI), and 763-783 (GFGI…ILCE). N813 carries an N-linked (GlcNAc...) asparagine glycan. An ABC transporter 2 domain is found at 857–1099 (FHWRNLCYDV…TMIDYFESHG (243 aa)). 893–900 (GASGAGKT) contributes to the ATP binding site. A glycan (N-linked (GlcNAc...) asparagine) is linked at N1159. A run of 3 helical transmembrane segments spans residues 1193–1213 (YLWS…FTFF), 1228–1248 (AVFM…PSFV), and 1278–1298 (IPWN…AIGF). N-linked (GlcNAc...) asparagine glycosylation is present at N1301. The next 2 membrane-spanning stretches (helical) occupy residues 1314–1334 (LFWL…LFCI) and 1342–1362 (AAAN…GVLV). N-linked (GlcNAc...) asparagine glycosylation is present at N1412. A helical membrane pass occupies residues 1466–1486 (WGIFICYIAFNYIAGIFLYWL).

Belongs to the ABC transporter superfamily. Post-translationally, phosphorylated at Ser-307 and Ser-484. Ser-307 and Ser-484 are dephosphorylated on glucose depletion and independently rephosphorylated during glucose exposure or under stress.

It is found in the cell membrane. With respect to regulation, inhibited by clorgyline. Inhibited by RC21v3, a 4-methoxy-2,3,6-trimethylbenzenesulphonyl derivative of the D-octapeptide D-FFKWQRRR, via the interaction with the ectodomain. FK506, enniatin, milbemycin alpha-11, and milbemycin beta-9 also inhibit CDR1 activity. Inhibited by milbemycin A3/A4 oxim derivatives. Its function is as follows. Pleiotropic ABC efflux transporter that transports and confers resistance to structurally and functionally unrelated compounds including rhodamine 6G, Nile red, caspofungin, cycloheximide, or azoles such as fluconazole, itraconazole, ketoconazole, posaconazole, voriconazole, and isavuconazole. Chlorbromuron, itraconazole, yohimbine, ketoconazole, miconazole, clotrimazole, DE-11, tamoxifen, quinidine, verapamil can compete for rhodamine 6G's binding site(s) while compounds such as propanil, chloramphenicol, benomyl, voriconazole, tritylimidazole, ketoconazole, miconazole, tamoxifen, gefitinib shared binding site(s) with fluconazole. Nile red mediated efflux appears to be relatively more specific since only five compounds such as ZW3-12, rhodamine 123, miconazole, clotrimazole, and itraconazole can inhibit its accumulation. Does not use as substrates 4-nitroquinoline 1-oxide (4-NQO) and disulfiram. Does not play a role in the azole resistance in mature biofilms. This chain is Pleiotropic ABC efflux transporter of multiple drugs CDR1, found in Candida glabrata (strain ATCC 2001 / BCRC 20586 / JCM 3761 / NBRC 0622 / NRRL Y-65 / CBS 138) (Yeast).